The primary structure comprises 348 residues: N-(sulfonatooxy)prop-2-enimidothioate sulfolyase (348 aa).

Kelch repeat units follow at residues 1-33 (MART…VIGD), 34-85 (KLYC…VAVG), 87-133 (KLYV…FHSM), 139-194 (HVYV…VVQG), 209-254 (KIPT…FAHA), 259-314 (YIII…ASTT), and 322-348 (GLLV…NSST). Residues E46, R94, T129, F130, and R157 each contribute to the a (Z)-N-(sulfonatooxy)alkanimidothioate site. R94 serves as the catalytic Proton donor. R157 acts as the Proton donor in catalysis. The active-site Proton acceptor is the E220. E266 provides a ligand contact to Fe(2+). Position 269 (R269) interacts with a (Z)-N-(sulfonatooxy)alkanimidothioate. Fe(2+) contacts are provided by D270 and H274. The a (Z)-N-(sulfonatooxy)alkanimidothioate site is built by W309 and V310.

As to quaternary structure, homodimer. Fe(2+) serves as cofactor. Expressed constitutively in roots, stems, leaves, flowers, siliques and seedlings.

It catalyses the reaction (Z)-N-(sulfonatooxy)prop-2-enimidothioate = allyl thiocyanate + sulfate. The enzyme catalyses (Z)-N-(sulfonatooxy)prop-2-enimidothioate = 2-(thiiran-2-yl)acetonitrile + sulfate. It carries out the reaction (Z)-N-(sulfonatooxy)prop-2-enimidothioate = allyl isothiocyanate + sulfate. The catalysed reaction is (Z)-phenyl-N-(sulfonatooxy)methanimidothioate = phenylacetonitrile + sulfur + sulfate. It catalyses the reaction glucoerucin + H2O = (Z)-4-methylsulfanylbutyl-N-(sulfonatooxy)methanimidothioate + D-glucose. The enzyme catalyses (Z)-4-methylsulfanylbutyl-N-(sulfonatooxy)methanimidothioate = 5-(methylsulfanyl)pentanenitrile + sulfur + sulfate + H(+). Its activity is regulated as follows. Stimulated by the presence of Fe(2+) leading to an increase formation of both thiocyanate and epithionitrile with allylglucosinolate as substrate in the presence of myrosinase. Repressed by EDTA. In terms of biological role, specifier protein that contributes to constitutive and herbivore-induced simple nitrile formation. Catalyzes allylthiocyanate and corresponding epithionitrile formation from allylglucosinolate in the presence of myrosinase. Also converts aliphatic glucosinolates, such as indol-3-ylmethylglucosinolate, 4-methylsulfinylbutylglucosinolate, 4-methylthiobutyl- and benzylisothiocyanate, to simple nitriles. The protein is N-(sulfonatooxy)prop-2-enimidothioate sulfolyase of Thlaspi arvense (Field penny-cress).